A 421-amino-acid polypeptide reads, in one-letter code: E3 ubiquitin protein ligase DRIP1 (421 aa).

The RING-type zinc finger occupies 16–57; that stretch reads CSICDNILRDATTISECLHTFCRKCIYEKITEDEIETCPVCN. 2 stretches are compositionally biased toward polar residues: residues 106–121 and 157–172; these read ISSL…AQAG and ESTS…TQNK. Disordered regions lie at residues 106–198 and 216–307; these read ISSL…WDSK and PLKS…QERR. Residues 178–198 are compositionally biased toward basic and acidic residues; it reads SCKESISNKENKDGDEPWDSK. Residues 218 to 227 show a composition bias toward low complexity; it reads KSSASQGSGS. Over residues 244-253 the composition is skewed to basic residues; the sequence is TKTKNKKRKC. Over residues 262–271 the composition is skewed to polar residues; that stretch reads NGDPTTSETV. The span at 274 to 284 shows a compositional bias: basic residues; the sequence is KRMRTTQRKRS. A compositionally biased stretch (polar residues) spans 285–294; sequence ATTLGDSRNL.

Interacts with DREB2A. Post-translationally, autoubiquitinated. Expressed in roots, leaves and flowers.

Its subcellular location is the nucleus. The catalysed reaction is S-ubiquitinyl-[E2 ubiquitin-conjugating enzyme]-L-cysteine + [acceptor protein]-L-lysine = [E2 ubiquitin-conjugating enzyme]-L-cysteine + N(6)-ubiquitinyl-[acceptor protein]-L-lysine.. It participates in protein modification; protein ubiquitination. E3 ubiquitin-protein ligase that acts as a negative regulator of the response to water stress. Mediates ubiquitination and subsequent proteasomal degradation of the drought-induced transcriptional activator DREB2A. Functionally redundant with DRIP2. This chain is E3 ubiquitin protein ligase DRIP1 (DRIP1), found in Arabidopsis thaliana (Mouse-ear cress).